Here is a 430-residue protein sequence, read N- to C-terminus: Sphingosine-1-phosphate phosphatase 1 (430 aa).

The disordered stretch occupies residues 34–103 (SSPAADEDAE…AGSQRRNSLT (70 aa)). Residue S101 is modified to Phosphoserine. Position 103 is a phosphothreonine (T103). The next 4 helical transmembrane spans lie at 121–141 (FCLGTELGNELFYILFFPFWI), 152–172 (LVIIWVLVMYLGQCTKDIIRW), 193–213 (MPSTHAMSGTAIPIAMFLLTY), and 216–236 (WQYPLIYGLILIPCWSSLVCL). The tract at residues 167–175 (KDIIRWPRP) is phosphatase sequence motif I. The segment at 194 to 197 (PSTH) is phosphatase sequence motif II. H197 serves as the catalytic Proton donor. The phosphatase sequence motif III stretch occupies residues 237-248 (SRIYMGMHSILD). H244 acts as the Nucleophile in catalysis. A run of 5 helical transmembrane segments spans residues 246–266 (ILDVIAGFLYTILILIIFYPL), 279–299 (YAPLIIIGLHLILGIFSFTLD), 311–331 (ILGSGAGIACGSHAAYTLGLS), 348–368 (VTLFGKAILRIVLGMLLVLFV), and 409–429 (YGMVGFSITFLVPYVFSFIGI).

This sequence belongs to the type 2 lipid phosphate phosphatase family. Highly expressed in liver and kidney. Expressed in epidermis, in the stratum granulosum and the stratum spinosum.

Its subcellular location is the endoplasmic reticulum membrane. It is found in the cell membrane. It carries out the reaction sphinganine 1-phosphate + H2O = sphinganine + phosphate. It catalyses the reaction sphing-4-enine 1-phosphate + H2O = sphing-4-enine + phosphate. With respect to regulation, inhibited by NaF, sodium orthovanadate, propanolol, and N-ethylmaleimide. Its function is as follows. Specifically dephosphorylates sphingosine 1-phosphate (S1P), dihydro-S1P, and phyto-S1P. Does not act on ceramide 1-phosphate, lysophosphatidic acid or phosphatidic acid. Sphingosine-1-phosphate phosphatase activity is needed for efficient recycling of sphingosine into the sphingolipid synthesis pathway. Regulates the intracellular levels of the bioactive sphingolipid metabolite S1P that regulates diverse biological processes acting both as an extracellular receptor ligand or as an intracellular second messenger. Involved in efficient ceramide synthesis from exogenous sphingoid bases. Converts S1P to sphingosine, which is readily metabolized to ceramide via ceramide synthase. In concert with sphingosine kinase 2 (SphK2), recycles sphingosine into ceramide through a phosphorylation/dephosphorylation cycle. Regulates endoplasmic-to-Golgi trafficking of ceramides, resulting in the regulation of ceramide levels in the endoplasmic reticulum, preferentially long-chain ceramide species, and influences the anterograde membrane transport of both ceramide and proteins from the endoplasmic reticulum to the Golgi apparatus. The modulation of intracellular ceramide levels in turn regulates apoptosis. Via S1P levels, modulates resting tone, intracellular Ca(2+) and myogenic vasoconstriction in resistance arteries. Also involved in unfolded protein response (UPR) and ER stress-induced autophagy via regulation of intracellular S1P levels. Involved in the regulation of epidermal homeostasis and keratinocyte differentiation. The protein is Sphingosine-1-phosphate phosphatase 1 of Mus musculus (Mouse).